The primary structure comprises 141 residues: MRQRTIVCPLIQNDGAYLLCKMADDRGVFPGQWALSGGGVEPGERIEEALRREIREELGEQLLLTEITPWTFSDDIRTKTYADGRKEEIYMIYLIFDCVSANRDVKINEEFQDYAWVKPEDLVHYDLNVATRKTLRLKGLL.

A Nudix hydrolase domain is found at 1–141 (MRQRTIVCPL…RKTLRLKGLL (141 aa)). Residues 38-59 (GGVEPGERIEEALRREIREELG) carry the Nudix box motif.

This sequence belongs to the Nudix hydrolase family. NudI subfamily. As to quaternary structure, monomer. It depends on Mg(2+) as a cofactor.

It carries out the reaction a ribonucleoside 5'-triphosphate + H2O = a ribonucleoside 5'-phosphate + diphosphate + H(+). The enzyme catalyses a 2'-deoxyribonucleoside 5'-triphosphate + H2O = a 2'-deoxyribonucleoside 5'-phosphate + diphosphate + H(+). The catalysed reaction is dUTP + H2O = dUMP + diphosphate + H(+). It catalyses the reaction dTTP + H2O = dTMP + diphosphate + H(+). It carries out the reaction dCTP + H2O = dCMP + diphosphate + H(+). Functionally, catalyzes the hydrolysis of nucleoside triphosphates, with a preference for pyrimidine deoxynucleoside triphosphates (dUTP, dTTP and dCTP). The sequence is that of Nucleoside triphosphatase NudI from Escherichia coli O6:K15:H31 (strain 536 / UPEC).